The sequence spans 186 residues: Cytochrome b6-f complex iron-sulfur subunit (186 aa).

The helical transmembrane segment at 16-38 threads the bilayer; the sequence is LLSFVTGGAIAATTAATLYPVVL. The Rieske domain occupies 74 to 163; that stretch reads GEPVLTLGLD…ATVSDDKVLI (90 aa). [2Fe-2S] cluster-binding residues include Cys109, His111, Cys127, and His130. Cysteines 114 and 129 form a disulfide.

The protein belongs to the Rieske iron-sulfur protein family. As to quaternary structure, the 4 large subunits of the cytochrome b6-f complex are cytochrome b6, subunit IV (17 kDa polypeptide, PetD), cytochrome f and the Rieske protein, while the 4 small subunits are PetG, PetL, PetM and PetN. The complex functions as a dimer. [2Fe-2S] cluster is required as a cofactor.

It localises to the cell inner membrane. It catalyses the reaction 2 oxidized [plastocyanin] + a plastoquinol + 2 H(+)(in) = 2 reduced [plastocyanin] + a plastoquinone + 4 H(+)(out). Component of the cytochrome b6-f complex, which mediates electron transfer between photosystem II (PSII) and photosystem I (PSI), cyclic electron flow around PSI, and state transitions. The protein is Cytochrome b6-f complex iron-sulfur subunit of Gloeobacter violaceus (strain ATCC 29082 / PCC 7421).